Here is a 247-residue protein sequence, read N- to C-terminus: Coproheme decarboxylase (247 aa).

Fe-coproporphyrin III contacts are provided by residues Arg129, 143 to 147 (YPMDK), His170, Gln183, and Ser221. Residue Tyr143 is part of the active site.

This sequence belongs to the ChdC family. Type 1 subfamily. Fe-coproporphyrin III is required as a cofactor.

It carries out the reaction Fe-coproporphyrin III + 2 H2O2 + 2 H(+) = heme b + 2 CO2 + 4 H2O. The enzyme catalyses Fe-coproporphyrin III + H2O2 + H(+) = harderoheme III + CO2 + 2 H2O. The catalysed reaction is harderoheme III + H2O2 + H(+) = heme b + CO2 + 2 H2O. The protein operates within porphyrin-containing compound metabolism; protoheme biosynthesis. In terms of biological role, involved in coproporphyrin-dependent heme b biosynthesis. Catalyzes the decarboxylation of Fe-coproporphyrin III (coproheme) to heme b (protoheme IX), the last step of the pathway. The reaction occurs in a stepwise manner with a three-propionate intermediate. In Bacillus cereus (strain ATCC 10987 / NRS 248), this protein is Coproheme decarboxylase.